Reading from the N-terminus, the 519-residue chain is ATP synthase subunit beta, mitochondrial (519 aa).

Residues 1 to 21 constitute a mitochondrion transit peptide; sequence MLTRFRSAVLRGAVSITGARA. Residues 184-191 and Arg-216 contribute to the ATP site; that span reads GAGVGKTV.

Belongs to the ATPase alpha/beta chains family. As to quaternary structure, F-type ATPases have 2 components, F(1) - the catalytic core - and F(o) - the membrane proton channel. F(1) has five subunits: alpha(3), beta(3), gamma(1), delta(1), epsilon(1), plus the additional subunit P18 (Tb427.05.1710) that is not present in F(1)F(o) ATP synthase from metazoa. Subunit P18 (Tb927.5.1710) interacts with the alpha subunit with a 1:1 stoichiometry; the interaction is direct. Subunit gamma is part of the central stalk. F(o) has three main subunits: a, b and c. The trypanosomal ATPase complex contains additional subunits that are not present in the F(1)F(o) ATP synthase from metazoa.

It localises to the mitochondrion. The protein localises to the mitochondrion inner membrane. The enzyme catalyses ATP + H2O + 4 H(+)(in) = ADP + phosphate + 5 H(+)(out). Mitochondrial membrane ATP synthase (F(1)F(o) ATP synthase) produces ATP from ADP in the presence of a proton gradient across the membrane which is generated by electron transport complexes of the respiratory chain. F-type ATPases consist of two structural domains, F(1) - containing the extramembraneous catalytic core, and F(o) - containing the membrane proton channel, linked together by a central stalk and a peripheral stalk. During catalysis, ATP synthesis in the catalytic domain of F(1) is coupled via a rotary mechanism of the central stalk subunits to proton translocation. Subunits alpha and beta form the catalytic core in F(1). Rotation of the central stalk against the surrounding alpha(3)beta(3) subunits leads to hydrolysis of ATP in three separate catalytic sites on the beta subunits. Contrary to the procyclic, insect form that requires F(1)F(o) ATP synthase for ATP synthesis, the bloodstream form relies on ATP hydrolysis by F(1)F(o) ATP synthase to maintain its mitochondrial membrane potential. The sequence is that of ATP synthase subunit beta, mitochondrial from Trypanosoma brucei brucei.